Here is a 487-residue protein sequence, read N- to C-terminus: MPN domain-containing protein (487 aa).

The segment at 1–55 is disordered; the sequence is MAAPESLSPGATAEEAPEEDEDDAEAEDPERGTGSGGRSGSLGGSGGGTAGPGMA. An N-acetylalanine modification is found at Ala2. Position 8 is a phosphoserine (Ser8). Positions 15–28 are enriched in acidic residues; it reads EAPEEDEDDAEAED. Positions 33–55 are enriched in gly residues; it reads TGSGGRSGSLGGSGGGTAGPGMA. One can recognise an RAMA domain in the interval 61–156; the sequence is TRRAVTLRVL…KYKAAWLRRH (96 aa). Positions 113, 115, and 135 each coordinate DNA. Residues 163-217 are disordered; that stretch reads ATADESPTSEGEEEELLLEEEEEDVLAGVSSEDKGHRPPGKGSLEPEATPPGKRM. A phosphoserine mark is found at Ser168 and Ser171. Residues 172 to 187 are compositionally biased toward acidic residues; that stretch reads EGEEEELLLEEEEEDV. In terms of domain architecture, MPN spans 258–393; that stretch reads VAVSSNVLFL…PESKICPFWV (136 aa). 3 residues coordinate Zn(2+): His335, His337, and Asp348. Positions 335 to 348 match the JAMM motif motif; it reads HSHPHSPAVPSLQD.

It belongs to the peptidase M67 family. In terms of assembly, monomer. Mainly monomoric, but when binds to dsDNA, forms homotetramer assembled into two homodimers. May interact with histones; this interaction is facilitated by. Degraded following binding to N(6)-methyladenosine methylated DNA (m6A).

Functionally, probable protease. Acts as a sensor of N(6)-methyladenosine methylation on DNA (m6A): recognizes and binds m6A DNA, leading to its degradation. Binds only double strand DNA (dsDNA) in a sequence-independent manner. This Mus musculus (Mouse) protein is MPN domain-containing protein.